Consider the following 336-residue polypeptide: GTPase Obg (336 aa).

The region spanning 1–159 (MKFVDSATVF…LELAMELKLM (159 aa)) is the Obg domain. The disordered stretch occupies residues 120–143 (GGHGGRGNQHFATSTNQAPRRSEP). A compositionally biased stretch (polar residues) spans 129–138 (HFATSTNQAP). The region spanning 160–323 (ADVGLVGFPN…LKDELWRQVS (164 aa)) is the OBG-type G domain. GTP-binding positions include 166 to 173 (GFPNAGKS), 191 to 195 (FTTLV), 213 to 216 (DIPG), 280 to 283 (TKMD), and 304 to 306 (SSV). Mg(2+)-binding residues include Ser173 and Thr193.

Belongs to the TRAFAC class OBG-HflX-like GTPase superfamily. OBG GTPase family. In terms of assembly, monomer. Requires Mg(2+) as cofactor.

The protein localises to the cytoplasm. Its function is as follows. An essential GTPase which binds GTP, GDP and possibly (p)ppGpp with moderate affinity, with high nucleotide exchange rates and a fairly low GTP hydrolysis rate. Plays a role in control of the cell cycle, stress response, ribosome biogenesis and in those bacteria that undergo differentiation, in morphogenesis control. In Chlorobium phaeovibrioides (strain DSM 265 / 1930) (Prosthecochloris vibrioformis (strain DSM 265)), this protein is GTPase Obg.